The chain runs to 215 residues: MPGEATETVPATEQELPQPQAETGSGTESDSDESVPELEEQDSTQATTQQAQLAAAAEIDEEPVSKAKQSRSEKKARKAMSKLGLRQVTGVTRVTIRKSKNILFVITKPDVYKSPASDTYIVFGEAKIEDLSQQAQLAAAEKFKVQGEAVSNIQENTQTPTVQEESEEEEVDETGVEVKDIELVMSQANVSRAKAVRALKNNSNDIVNAIMELTM.

A disordered region spans residues 1 to 81 (MPGEATETVP…SEKKARKAMS (81 aa)). Polar residues predominate over residues 9–28 (VPATEQELPQPQAETGSGTE). A compositionally biased stretch (acidic residues) spans 29–42 (SDSDESVPELEEQD). S43 bears the Phosphoserine; by ILK1 mark. Residues 44 to 57 (TQATTQQAQLAAAA) show a composition bias toward low complexity. Residues 69–80 (QSRSEKKARKAM) form a required for DNA-binding region. The NAC-A/B domain maps to 70-135 (SRSEKKARKA…AKIEDLSQQA (66 aa)). Residues 93 to 108 (RVTIRKSKNILFVITK) form an RNA/DNA-binding region. Position 132 is a phosphoserine (S132). K142 is modified (N6-acetyllysine; alternate). A Glycyl lysine isopeptide (Lys-Gly) (interchain with G-Cter in SUMO2); alternate cross-link involves residue K142. At T159 the chain carries Phosphothreonine; by GSK3-beta. The residue at position 161 (T161) is a Phosphothreonine. 4 positions are modified to phosphoserine: S166, S186, S191, and S203. The 38-residue stretch at 176 to 213 (VEVKDIELVMSQANVSRAKAVRALKNNSNDIVNAIMEL) folds into the UBA domain.

Belongs to the NAC-alpha family. Interacts with TBP and JUN. Part of the nascent polypeptide-associated complex (NAC), which is a heterodimer of NACA and BTF3 (via NAC-A/B domains). NAC associates with ribosomes through the BTF3/NACB subunit and contacts the ribosomal protein L23, which is positioned near the exiting site. Both subunits can contact nascent polypeptide chains. NACA may also form homodimers, and only this form binds DNA. Phosphorylation of Thr-159 by GSK3B may promote proteasome mediated degradation. Phosphorylation of Ser-43 by ILK during cell adhesion may promote nuclear localization. As to expression, ubiquitously expressed.

It localises to the cytoplasm. Its subcellular location is the nucleus. Prevents inappropriate targeting of non-secretory polypeptides to the endoplasmic reticulum (ER). Binds to nascent polypeptide chains as they emerge from the ribosome and blocks their interaction with the signal recognition particle (SRP), which normally targets nascent secretory peptides to the ER. Also reduces the inherent affinity of ribosomes for protein translocation sites in the ER membrane (M sites). May act as a specific coactivator for JUN, binding to DNA and stabilizing the interaction of JUN homodimers with target gene promoters. The protein is Nascent polypeptide-associated complex subunit alpha (NACA) of Homo sapiens (Human).